The sequence spans 490 residues: Tektin-3 (490 aa).

Threonine 7, threonine 9, and threonine 10 each carry an O-linked (GalNAc...) threonine glycan. N-linked (GlcNAc...) asparagine glycosylation is found at asparagine 41, asparagine 86, asparagine 103, asparagine 111, asparagine 276, and asparagine 344. The stretch at 424-451 forms a coiled coil; sequence VHEVDDTIQTLQQRLRDAEDTLQSLVHI.

It belongs to the tektin family. As to quaternary structure, microtubule inner protein component of sperm flagellar doublet microtubules. Interacts with TEKT1, TEKT2, TEKT4 and TEKT5. Interacts with CCDC38. N- and O-glycosylated. Post-translationally, may be proteolytically processed during the epididymal transit of spermatozoa. In terms of processing, ubiquitinated, leading to its degradation. Deubiquitinated by USP16, promoting its stability. In terms of tissue distribution, expressed in spermatozoa. Expressed in airway epithelial cells.

Its subcellular location is the cytoplasm. It localises to the cytoskeleton. It is found in the cilium axoneme. The protein localises to the flagellum axoneme. The protein resides in the cytoplasmic vesicle. Its subcellular location is the secretory vesicle. It localises to the acrosome outer membrane. Functionally, microtubule inner protein (MIP) part of the dynein-decorated doublet microtubules (DMTs) in cilia and flagellar axoneme. Forms filamentous polymers in the walls of ciliary and flagellar microtubules. Required for normal sperm mobility. The protein is Tektin-3 (TEKT3) of Homo sapiens (Human).